An 858-amino-acid polypeptide reads, in one-letter code: Selenocysteine insertion sequence-binding protein 2 (858 aa).

3 disordered regions span residues 127–261 (KPRH…GDVG), 275–296 (SDHTDGAVTSNATTSSPSCTQE), and 327–625 (LKKT…DSAT). Basic and acidic residues-rich tracts occupy residues 147-166 (KPSDERRACEEQKSSSRRAD), 188-197 (SSLKSDGYHK), and 215-224 (PEFEFSRLDF). Polar residues-rich tracts occupy residues 281–296 (AVTSNATTSSPSCTQE) and 327–352 (LKKTTSSADAKNVSVTSEALSSNPSY). A Nuclear localization signal motif is present at residues 380 to 387 (KNKKKKEK). A compositionally biased stretch (basic residues) spans 418 to 429 (RRHRGQSPKLHS). The segment covering 430–447 (KQQTQNEFKTSGKKSQVP) has biased composition (polar residues). A compositionally biased stretch (basic and acidic residues) spans 539–548 (ILKERQERMQ). Composition is skewed to polar residues over residues 554–563 (SAVSLTVASD) and 571–582 (GASNQTPSQDNP). Residues 678-699 (LVLGLREVLKHLKLRKLKCIII) are RNA-binding. The interval 785 to 819 (MRQEQAGEPGPQSPPSPPMQDPIPSTEEGTLPSTG) is disordered. The segment covering 795-805 (PQSPPSPPMQD) has biased composition (pro residues).

Its subcellular location is the cytoplasm. The protein resides in the nucleus. Its function is as follows. mRNA-binding protein that binds to the SECIS (selenocysteine insertion sequence) element present in the 3'-UTR of mRNAs encoding selenoproteins and facilitates the incorporation of the rare amino acid selenocysteine. Insertion of selenocysteine at UGA codons is mediated by SECISBP2 and EEFSEC: SECISBP2 (1) specifically binds the SECIS sequence once the 80S ribosome encounters an in-frame UGA codon and (2) contacts the RPS27A/eS31 of the 40S ribosome before ribosome stalling. (3) GTP-bound EEFSEC then delivers selenocysteinyl-tRNA(Sec) to the 80S ribosome and adopts a preaccommodated state conformation. (4) After GTP hydrolysis, EEFSEC dissociates from the assembly, selenocysteinyl-tRNA(Sec) accommodates, and peptide bond synthesis and selenoprotein elongation occur. The protein is Selenocysteine insertion sequence-binding protein 2 of Mus musculus (Mouse).